Consider the following 506-residue polypeptide: Protein MGF 505-9R (506 aa).

ANK repeat units follow at residues 54–83, 253–283, and 313–343; these read PTHKAVQIAASEGNEDIVKLFLLWKGSLQY, QVDTVLFQAVKYNHRKILAHFIHEIPRETVE, and FVKKLLHAVVKHKYMLIIKLLLERPKKKINL.

The protein belongs to the asfivirus MGF 505 family.

Plays a role in virus cell tropism, and may be required for efficient virus replication in macrophages. In Ornithodoros (relapsing fever ticks), this protein is Protein MGF 505-9R.